A 299-amino-acid chain; its full sequence is Homeobox protein ceh-24 (299 aa).

Basic and acidic residues predominate over residues 1 to 35 (MSEKETPSPVLDVKKEKNEETGIDEEKSSEDDCSK). 2 disordered regions span residues 1–45 (MSEK…NPSK) and 208–263 (QEKE…SGVF). A DNA-binding region (homeobox) is located at residues 150–209 (RRKRRVLFSQAQVYELERRFKQAKYLTAPEREQLANSIRLTPTQVKIWFQNHRYKCKRQE). Residues 242-252 (DDKDDEEEEES) show a composition bias toward acidic residues.

It belongs to the NK-2 homeobox family. In terms of tissue distribution, expressed in the 8 vulval muscles, 8-10 ventral neurons in the head and in the most posterior pharyngeal muscle cell, m8. Expressed in SIA, SIB and SMB sublateral motor neurons, and in muscles of the pharynx and vulva.

The protein localises to the nucleus. Functionally, probable transcriptional regulator that is required in neural development for the normal formation of sublateral cholinergic motor neuron processes. Plays a role in regulating the expression of acetylcholine transporter protein unc-17 in the sublateral processes. In particular, it is required in sublateral motor neurons for a left-right turning behavior that occurs during the lethargus phase of the normal sleep process called 'flipping'. During 'flipping' animals rotate 180 degrees about their longitudinal axis. The sequence is that of Homeobox protein ceh-24 from Caenorhabditis elegans.